A 311-amino-acid polypeptide reads, in one-letter code: Putative tenascin-XA (311 aa).

Disordered stretches follow at residues 1-47 (MEDK…EPRL) and 124-150 (LSAEGTTGLAPAGQTSEESRPRLSQLS). Fibronectin type-III domains follow at residues 41–135 (PPEE…LAPA), 145–249 (RLSQ…SPRD), and 250–311 (LQFS…SCVH).

In terms of tissue distribution, expressed in the adrenal gland.

The sequence is that of Putative tenascin-XA (TNXA) from Homo sapiens (Human).